Reading from the N-terminus, the 130-residue chain is Sec-independent protein translocase protein TatB (130 aa).

A helical transmembrane segment spans residues 1–21 (MFDISFTELIVIGIVALVVIG). A disordered region spans residues 70 to 130 (VDSFQNSVHS…TPKEPRQSGS (61 aa)). Composition is skewed to basic and acidic residues over residues 80–89 (EINKIQETAD) and 96–111 (PEKESHAVESGGKTEP).

It belongs to the TatB family. In terms of assembly, the Tat system comprises two distinct complexes: a TatABC complex, containing multiple copies of TatA, TatB and TatC subunits, and a separate TatA complex, containing only TatA subunits. Substrates initially bind to the TatABC complex, which probably triggers association of the separate TatA complex to form the active translocon.

It is found in the cell inner membrane. Part of the twin-arginine translocation (Tat) system that transports large folded proteins containing a characteristic twin-arginine motif in their signal peptide across membranes. Together with TatC, TatB is part of a receptor directly interacting with Tat signal peptides. TatB may form an oligomeric binding site that transiently accommodates folded Tat precursor proteins before their translocation. This is Sec-independent protein translocase protein TatB from Nitrosomonas eutropha (strain DSM 101675 / C91 / Nm57).